The primary structure comprises 214 residues: Dephospho-CoA kinase (214 aa).

A DPCK domain is found at 4–204 (IVGLTGGIGS…QRYLQLAQQK (201 aa)). 12-17 (GSGKST) lines the ATP pocket.

This sequence belongs to the CoaE family.

It localises to the cytoplasm. It catalyses the reaction 3'-dephospho-CoA + ATP = ADP + CoA + H(+). The protein operates within cofactor biosynthesis; coenzyme A biosynthesis; CoA from (R)-pantothenate: step 5/5. Functionally, catalyzes the phosphorylation of the 3'-hydroxyl group of dephosphocoenzyme A to form coenzyme A. The protein is Dephospho-CoA kinase of Mannheimia succiniciproducens (strain KCTC 0769BP / MBEL55E).